A 268-amino-acid polypeptide reads, in one-letter code: Ribosomal RNA small subunit methyltransferase A (268 aa).

The S-adenosyl-L-methionine site is built by asparagine 11, leucine 13, glycine 37, glutamate 58, aspartate 86, and asparagine 104.

Belongs to the class I-like SAM-binding methyltransferase superfamily. rRNA adenine N(6)-methyltransferase family. RsmA subfamily.

The protein resides in the cytoplasm. The enzyme catalyses adenosine(1518)/adenosine(1519) in 16S rRNA + 4 S-adenosyl-L-methionine = N(6)-dimethyladenosine(1518)/N(6)-dimethyladenosine(1519) in 16S rRNA + 4 S-adenosyl-L-homocysteine + 4 H(+). In terms of biological role, specifically dimethylates two adjacent adenosines (A1518 and A1519) in the loop of a conserved hairpin near the 3'-end of 16S rRNA in the 30S particle. May play a critical role in biogenesis of 30S subunits. The chain is Ribosomal RNA small subunit methyltransferase A from Campylobacter fetus subsp. fetus (strain 82-40).